Consider the following 293-residue polypeptide: Lysosomal amino acid transporter 1 homolog (293 aa).

Residues 1–37 (MVWRTLVASNFSTCPNGSIQWIWDVFGECAQDGWDEA) lie on the Lumenal side of the membrane. N10 carries an N-linked (GlcNAc...) asparagine glycan. Positions 34–100 (WDEASVALGL…LADQLPLQTY (67 aa)) constitute a PQ-loop 1 domain. Residues 38-58 (SVALGLVSIFCFAASTFPQYI) form a helical membrane-spanning segment. Over 59–71 (KACKTGNMDQALS) the chain is Cytoplasmic. The chain crosses the membrane as a helical span at residues 72–92 (LWFLLGWIGGDSCNLIGSFLA). Over 93–96 (DQLP) the chain is Lumenal. A helical transmembrane segment spans residues 97 to 117 (LQTYTAVYYVLADLLMLTLYF). Over 118–126 (HYKFKKQPS) the chain is Cytoplasmic. A helical membrane pass occupies residues 127-147 (LLSAPINSVLLFILGTVCITP). The Lumenal portion of the chain corresponds to 148–182 (LLSSTDPVAVPREGFRGRTLLSVEPGNKPFTKKEV). A helical membrane pass occupies residues 183–203 (VGFVIGSASSVLYLLSRLPQI). The PQ-loop 2 domain occupies 191–243 (SSVLYLLSRLPQIRTNFVRQSTQGISYSLFALVMLGNTLYGLSVLLKNPEVGQ). Over 204–214 (RTNFVRQSTQG) the chain is Cytoplasmic. Residues 215-235 (ISYSLFALVMLGNTLYGLSVL) traverse the membrane as a helical segment. Residues 236–254 (LKNPEVGQSEGSYLLHHLP) are Lumenal-facing. A helical transmembrane segment spans residues 255–275 (WLVGSLGVLLLDTIISIQFLV). Over 276 to 293 (YRSHDADAASEREPLLPS) the chain is Cytoplasmic. The Di-leucine motif motif lies at 290 to 291 (LL).

This sequence belongs to the laat-1 family.

Its subcellular location is the lysosome membrane. In terms of biological role, amino acid transporter that specifically mediates the pH-dependent export of the cationic amino acids arginine, histidine and lysine from lysosomes. The chain is Lysosomal amino acid transporter 1 homolog (Slc66a1) from Rattus norvegicus (Rat).